Consider the following 298-residue polypeptide: Probable alpha-L-glutamate ligase (298 aa).

An ATP-grasp domain is found at 108–290 (LQLLLKTGVP…IAAEIIDYIE (183 aa)). ATP-binding positions include Lys144, 181-182 (DF), Asp190, and 214-216 (RAN). The Mg(2+) site is built by Asp251, Glu263, and Asn265. 3 residues coordinate Mn(2+): Asp251, Glu263, and Asn265.

The protein belongs to the RimK family. Requires Mg(2+) as cofactor. Mn(2+) is required as a cofactor.

The protein is Probable alpha-L-glutamate ligase of Haemophilus influenzae (strain PittEE).